The sequence spans 179 residues: MTRLENMYKKEVVPALIKRFGYSNPMAVPRLVKITLNMGVGEAATNKKVLENAVADMAKVSGQKPIVTKSRISVASFKIRNGWPIGCKTTLRRSKMYEFLDRLINISLPCVRDFRGIPPRSFDGRGNFNMGVKEQVVFPEIDFDAVDAIRGMDIAITTTANSDAEAKALLDAFNFPFRN.

The protein belongs to the universal ribosomal protein uL5 family. In terms of assembly, part of the 50S ribosomal subunit; part of the 5S rRNA/L5/L18/L25 subcomplex. Contacts the 5S rRNA and the P site tRNA. Forms a bridge to the 30S subunit in the 70S ribosome.

This is one of the proteins that bind and probably mediate the attachment of the 5S RNA into the large ribosomal subunit, where it forms part of the central protuberance. In the 70S ribosome it contacts protein S13 of the 30S subunit (bridge B1b), connecting the 2 subunits; this bridge is implicated in subunit movement. Contacts the P site tRNA; the 5S rRNA and some of its associated proteins might help stabilize positioning of ribosome-bound tRNAs. The chain is Large ribosomal subunit protein uL5 from Xylella fastidiosa (strain M12).